Consider the following 345-residue polypeptide: Dimethyladenosine transferase 1, mitochondrial (345 aa).

The transit peptide at 1–27 directs the protein to the mitochondrion; sequence MAASGKLGTFRLPPLPTIREIIKLFGL. S-adenosyl-L-methionine contacts are provided by residues 35–38, Asn36, Leu38, Gly63, Glu85, Asp111, and Asn141; that span reads QNFL.

It belongs to the class I-like SAM-binding methyltransferase superfamily. rRNA adenine N(6)-methyltransferase family. KsgA subfamily. In terms of assembly, interacts with mitochondrial RNA polymerase POLRMT. Interacts with TFAM.

It localises to the mitochondrion. In terms of biological role, S-adenosyl-L-methionine-dependent methyltransferase which specifically dimethylates mitochondrial 12S rRNA at the conserved stem loop. Also required for basal transcription of mitochondrial DNA, probably via its interaction with POLRMT and TFAM. Stimulates transcription independently of the methyltransferase activity. This is Dimethyladenosine transferase 1, mitochondrial (Tfb1m) from Rattus norvegicus (Rat).